The chain runs to 125 residues: Putative RNA polymerase sigma-G factor (125 aa).

This sequence belongs to the sigma-70 factor family.

Functionally, sigma factors are initiation factors that promote the attachment of RNA polymerase to specific initiation sites and are then released. The chain is Putative RNA polymerase sigma-G factor from Bacillus thuringiensis subsp. kurstaki.